Reading from the N-terminus, the 397-residue chain is MTYDHIVIRYGEMSTKGKNRLRFVRCLKRNIAKKLKHFPNLQIEASRDRMYIRLHDTPPHPVIEKLQEVFGIQSLSLALKTESDLQKIKEATLFFVKQFPYEGKTFKISARRADKQFPITTNELNYELGSYVLKNTTGLTVDVHHPDIDVRVEVRKEGTYITAYDVPGAGGLPVGTSGKAMLMLSGGIDSPVAGYLAMKRGLQIEAVHFFSPPFTSERAKQKVIDLAQRLTEFGGTIRLHIVPFTELQQAIYKQVPENYSLIAMRRAMLRITDEIRKKENGLAIVTGESLGQVASQTLESMVVVNDVTTTPILRPLVSMDKTEIIAIAERIGTHHISIRPYEDCCTIFTPKAPKTKPKKEKIIQYEKFLPLDEMIAQTVARVETITLKPNEPLDELF.

One can recognise a THUMP domain in the interval 60–165 (HPVIEKLQEV…KEGTYITAYD (106 aa)). Residues 183 to 184 (ML), 208 to 209 (HF), Arg265, Gly287, and Gln296 contribute to the ATP site.

Belongs to the ThiI family.

The protein localises to the cytoplasm. The enzyme catalyses [ThiI sulfur-carrier protein]-S-sulfanyl-L-cysteine + a uridine in tRNA + 2 reduced [2Fe-2S]-[ferredoxin] + ATP + H(+) = [ThiI sulfur-carrier protein]-L-cysteine + a 4-thiouridine in tRNA + 2 oxidized [2Fe-2S]-[ferredoxin] + AMP + diphosphate. The catalysed reaction is [ThiS sulfur-carrier protein]-C-terminal Gly-Gly-AMP + S-sulfanyl-L-cysteinyl-[cysteine desulfurase] + AH2 = [ThiS sulfur-carrier protein]-C-terminal-Gly-aminoethanethioate + L-cysteinyl-[cysteine desulfurase] + A + AMP + 2 H(+). It functions in the pathway cofactor biosynthesis; thiamine diphosphate biosynthesis. In terms of biological role, catalyzes the ATP-dependent transfer of a sulfur to tRNA to produce 4-thiouridine in position 8 of tRNAs, which functions as a near-UV photosensor. Also catalyzes the transfer of sulfur to the sulfur carrier protein ThiS, forming ThiS-thiocarboxylate. This is a step in the synthesis of thiazole, in the thiamine biosynthesis pathway. The sulfur is donated as persulfide by IscS. This Anoxybacillus flavithermus (strain DSM 21510 / WK1) protein is Probable tRNA sulfurtransferase.